A 301-amino-acid polypeptide reads, in one-letter code: Ribosomal protein L11 methyltransferase (301 aa).

S-adenosyl-L-methionine-binding residues include Thr-146, Gly-167, Asp-189, and Asn-237.

It belongs to the methyltransferase superfamily. PrmA family.

It localises to the cytoplasm. It catalyses the reaction L-lysyl-[protein] + 3 S-adenosyl-L-methionine = N(6),N(6),N(6)-trimethyl-L-lysyl-[protein] + 3 S-adenosyl-L-homocysteine + 3 H(+). In terms of biological role, methylates ribosomal protein L11. The chain is Ribosomal protein L11 methyltransferase from Prochlorococcus marinus (strain MIT 9303).